The primary structure comprises 808 residues: Putative dimethyl sulfoxide reductase chain YnfE (808 aa).

Residues 1–43 (MSKNERMVGISRRTLVKSTAIGSLALAAGGFSLPFTLRNAAAA) constitute a signal peptide (tat-type signal). Residues 49–110 (EKVVWGACSV…SIRRRINHPD (62 aa)) form the 4Fe-4S Mo/W bis-MGD-type domain. The [4Fe-4S] cluster site is built by Cys-56, Cys-60, Cys-64, and Cys-96. Mo-bis(molybdopterin guanine dinucleotide) is bound at residue Ser-196.

It belongs to the prokaryotic molybdopterin-containing oxidoreductase family. The cofactor is [4Fe-4S] cluster. Mo-bis(molybdopterin guanine dinucleotide) is required as a cofactor. Post-translationally, exported by the Tat system. The position of the signal peptide cleavage has not been experimentally proven.

The protein localises to the cell membrane. Its function is as follows. Terminal reductase during anaerobic growth on various sulfoxide and N-oxide compounds. This chain is Putative dimethyl sulfoxide reductase chain YnfE (ynfE), found in Escherichia coli (strain K12).